An 84-amino-acid chain; its full sequence is Small ribosomal subunit protein bS16 (84 aa).

Belongs to the bacterial ribosomal protein bS16 family.

The sequence is that of Small ribosomal subunit protein bS16 from Acaryochloris marina (strain MBIC 11017).